The sequence spans 612 residues: Rhotekin-2 (612 aa).

Residues 3 to 79 (IKRKKIRESA…LRSQMGESNT (77 aa)) form the REM-1 domain. The PH domain occupies 285 to 392 (DEAMMGFLNQ…WMEAFWQHFY (108 aa)). Disordered stretches follow at residues 483-530 (RNKP…SDKE) and 574-612 (ENKA…QSQV). Over residues 486 to 498 (PPLLSSDDPSTSS) the composition is skewed to low complexity.

This Xenopus laevis (African clawed frog) protein is Rhotekin-2 (rtkn2).